Here is a 464-residue protein sequence, read N- to C-terminus: Citrate synthase 5, mitochondrial (464 aa).

The N-terminal 25 residues, 1–25 (MVFFRSVSAISRLRSRAVQQSSLSN), are a transit peptide targeting the mitochondrion. Residues His300, His346, and Asp401 contribute to the active site.

It belongs to the citrate synthase family.

The protein localises to the mitochondrion matrix. It carries out the reaction oxaloacetate + acetyl-CoA + H2O = citrate + CoA + H(+). The protein operates within carbohydrate metabolism; tricarboxylic acid cycle; isocitrate from oxaloacetate: step 1/2. This is Citrate synthase 5, mitochondrial (CSY5) from Arabidopsis thaliana (Mouse-ear cress).